The primary structure comprises 444 residues: Protein EVI2B (444 aa).

Residues 1–23 form the signal peptide; sequence MEFKYLVFIVLCQYLDNTFFSET. Topologically, residues 24 to 203 are extracellular; sequence EAITTEQQSL…GTAHKNNHNA (180 aa). Residues asparagine 63, asparagine 94, asparagine 104, and asparagine 127 are each glycosylated (N-linked (GlcNAc...) asparagine). Composition is skewed to polar residues over residues 104–131 and 160–171; these read NNSL…STGQ and THNQPTKSTPTI. The segment at 104–197 is disordered; sequence NNSLPQTSPS…EPPSGKGTAH (94 aa). Residues 177-187 show a composition bias toward pro residues; that stretch reads TPPPPPPPLTS. The chain crosses the membrane as a helical span at residues 204 to 224; sequence IAAILIGTIIISMLVAILMII. The Cytoplasmic portion of the chain corresponds to 225–444; sequence LWKYLRKPVL…SLPPPPTELL (220 aa). Threonine 250 carries the post-translational modification Phosphothreonine. Phosphoserine is present on residues serine 269, serine 272, serine 279, and serine 295. Composition is skewed to polar residues over residues 318 to 332 and 361 to 370; these read SEDS…TAVS and SPLPNDSINP. Disordered regions lie at residues 318–337 and 361–444; these read SEDS…DDAD and SPLP…TELL.

In terms of tissue distribution, expressed in myeloid and lymphoid progenitors and increased in mature hematopoietic populations with the highest levels in granulocytes.

It localises to the membrane. Required for granulocyte differentiation and functionality of hematopoietic progenitor cells through the control of cell cycle progression and survival of hematopoietic progenitor cells. This chain is Protein EVI2B, found in Mus musculus (Mouse).